We begin with the raw amino-acid sequence, 584 residues long: Zinc finger and BTB domain-containing protein 7A (584 aa).

The BTB domain maps to 34-101; it reads CDVVILVEGR…AYTATLTVST (68 aa). The segment at 220–313 is disordered; it reads YGPGPPAERP…EDGDGPDVDG (94 aa). The interval 277–584 is mediates interaction with KHDRBS1; sequence EEEAASLSEA…TDGNFTAGLA (308 aa). A compositionally biased stretch (low complexity) spans 281–290; it reads ASLSEAAPEP. Phosphoserine is present on residues S337 and S341. Residues 349–584 form a mediates interaction with RELA region; that stretch reads MDYYLKYFSG…TDGNFTAGLA (236 aa). The tract at residues 377–584 is mediates interaction with SMAD4; the sequence is RAKAFQKCPI…TDGNFTAGLA (208 aa). C2H2-type zinc fingers lie at residues 382–404 and 410–432; these read QKCP…IRTH and YECN…MRKH. K436 participates in a covalent cross-link: Glycyl lysine isopeptide (Lys-Gly) (interchain with G-Cter in SUMO2). The C2H2-type 3 zinc-finger motif lies at 438–460; it reads YLCQQCGAAFAHNYDLKNHMRVH. The C2H2-type 4; atypical zinc finger occupies 466–490; the sequence is YQCDSCCKTFVRSDHLHRHLKKDGC. Residues 486–584 are disordered; the sequence is KKDGCNGVPS…TDGNFTAGLA (99 aa). Low complexity predominate over residues 505–527; that stretch reads GGAPDPSPGATATPGAPAQPSSP. Residues S511, S525, and S526 each carry the phosphoserine modification. Residues 528-540 show a composition bias toward basic and acidic residues; that stretch reads DARRNGQEKHFKD. K539 participates in a covalent cross-link: Glycyl lysine isopeptide (Lys-Gly) (interchain with G-Cter in SUMO2). S549 is subject to Phosphoserine. Residues 560-572 are compositionally biased toward gly residues; it reads GAGGGGDSGGGPG.

As to quaternary structure, homodimer. Interacts with BCL6. Interacts with RELA; involved in the control by RELA of the accessibility of target gene promoters. Interacts with AR (via NR LBD domain); the interaction is direct and androgen-dependent. Interacts with NCOR1. Interacts with NCOR2. Interacts with SMAD4; the interaction is direct and stimulated by TGFB1. Interacts with HDAC1. Interacts with SP1; ZBTB7A prevents the binding to GC-rich motifs in promoters and represses the transcriptional activity of SP1. Interacts with the DNA-dependent protein kinase complex/DNA-PKc. Interacts with KHDRBS1; negatively regulates KHDRBS1 splicing activity. Post-translationally, sumoylated. Undergoes sumoylation with SUMO1 that may regulate its transcriptional activity. In terms of tissue distribution, widely expressed. In normal thymus, expressed in medullary epithelial cells and Hassle's corpuscles (at protein level). In tonsil, expressed in squamous epithelium and germinal center lymphocytes (at protein level). Up-regulated in a subset of lymphomas, as well as in a subset of breast, lung, colon, prostate and bladder carcinomas (at protein level). Expressed in adipose tissues.

It localises to the nucleus. In terms of biological role, transcription factor that represses the transcription of a wide range of genes involved in cell proliferation and differentiation. Directly and specifically binds to the consensus sequence 5'-[GA][CA]GACCCCCCCCC-3' and represses transcription both by regulating the organization of chromatin and through the direct recruitment of transcription factors to gene regulatory regions. Negatively regulates SMAD4 transcriptional activity in the TGF-beta signaling pathway through these two mechanisms. That is, recruits the chromatin regulator HDAC1 to the SMAD4-DNA complex and in parallel prevents the recruitment of the transcriptional activators CREBBP and EP300. Collaborates with transcription factors like RELA to modify the accessibility of gene transcription regulatory regions to secondary transcription factors. Also directly interacts with transcription factors like SP1 to prevent their binding to DNA. Functions as an androgen receptor/AR transcriptional corepressor by recruiting NCOR1 and NCOR2 to the androgen response elements/ARE on target genes. Thereby, negatively regulates androgen receptor signaling and androgen-induced cell proliferation. Involved in the switch between fetal and adult globin expression during erythroid cells maturation. Through its interaction with the NuRD complex regulates chromatin at the fetal globin genes to repress their transcription. Specifically represses the transcription of the tumor suppressor ARF isoform from the CDKN2A gene. Efficiently abrogates E2F1-dependent CDKN2A transactivation. Regulates chondrogenesis through the transcriptional repression of specific genes via a mechanism that also requires histone deacetylation. Regulates cell proliferation through the transcriptional regulation of genes involved in glycolysis. Involved in adipogenesis through the regulation of genes involved in adipocyte differentiation. Plays a key role in the differentiation of lymphoid progenitors into B and T lineages. Promotes differentiation towards the B lineage by inhibiting the T-cell instructive Notch signaling pathway through the specific transcriptional repression of Notch downstream target genes. Also regulates osteoclast differentiation. May also play a role, independently of its transcriptional activity, in double-strand break repair via classical non-homologous end joining/cNHEJ. Recruited to double-strand break sites on damage DNA, interacts with the DNA-dependent protein kinase complex and directly regulates its stability and activity in DNA repair. May also modulate the splicing activity of KHDRBS1 toward BCL2L1 in a mechanism which is histone deacetylase-dependent and thereby negatively regulates the pro-apoptotic effect of KHDRBS1. This Homo sapiens (Human) protein is Zinc finger and BTB domain-containing protein 7A.